We begin with the raw amino-acid sequence, 104 residues long: L-rhamnose mutarotase (104 aa).

Substrate is bound at residue Tyr-18. The active-site Proton donor is the His-22. Residues Tyr-41 and 76 to 77 contribute to the substrate site; that span reads WW.

The protein belongs to the rhamnose mutarotase family. Homodimer.

The protein resides in the cytoplasm. The enzyme catalyses alpha-L-rhamnose = beta-L-rhamnose. The protein operates within carbohydrate metabolism; L-rhamnose metabolism. Its function is as follows. Involved in the anomeric conversion of L-rhamnose. This Bacteroides thetaiotaomicron (strain ATCC 29148 / DSM 2079 / JCM 5827 / CCUG 10774 / NCTC 10582 / VPI-5482 / E50) protein is L-rhamnose mutarotase.